The chain runs to 513 residues: Light-independent protochlorophyllide reductase subunit B (513 aa).

A [4Fe-4S] cluster-binding site is contributed by Asp36. Asp299 (proton donor) is an active-site residue. Gly434 to Met435 provides a ligand contact to substrate.

The protein belongs to the ChlB/BchB/BchZ family. As to quaternary structure, protochlorophyllide reductase is composed of three subunits; ChlL, ChlN and ChlB. Forms a heterotetramer of two ChlB and two ChlN subunits. [4Fe-4S] cluster is required as a cofactor.

The protein localises to the plastid. The protein resides in the chloroplast. It carries out the reaction chlorophyllide a + oxidized 2[4Fe-4S]-[ferredoxin] + 2 ADP + 2 phosphate = protochlorophyllide a + reduced 2[4Fe-4S]-[ferredoxin] + 2 ATP + 2 H2O. Its pathway is porphyrin-containing compound metabolism; chlorophyll biosynthesis (light-independent). Component of the dark-operative protochlorophyllide reductase (DPOR) that uses Mg-ATP and reduced ferredoxin to reduce ring D of protochlorophyllide (Pchlide) to form chlorophyllide a (Chlide). This reaction is light-independent. The NB-protein (ChlN-ChlB) is the catalytic component of the complex. The chain is Light-independent protochlorophyllide reductase subunit B from Anthoceros angustus (Hornwort).